The following is a 371-amino-acid chain: Neuropeptide Y receptor type 6 (371 aa).

At 1–31 (MEVLTNQPTPNKTSGKSNNSAFFYFESCQPP) the chain is on the extracellular side. N11 and N18 each carry an N-linked (GlcNAc...) asparagine glycan. Residues 32 to 52 (FLAILLLLIAYTVILIMGIFG) form a helical membrane-spanning segment. Residues 53–82 (NLSLIIIIFKKQREAQNVTNILIANLSLSD) are Cytoplasmic-facing. The helical transmembrane segment at 83 to 103 (ILVCVMCIPFTVIYTLMDHWV) threads the bilayer. At 104-111 (FGNTMCKL) the chain is on the extracellular side. C109 and C196 are joined by a disulfide. A helical membrane pass occupies residues 112–132 (TSYVQSVSVSVSIFSLVLIAI). Residues 133–150 (ERYQLIVNPRGWKPRVAH) are Cytoplasmic-facing. A helical membrane pass occupies residues 151 to 171 (AYWGIILIWLISLTLSIPLFL). Over 172–206 (SYHLTNEPFHNLSLPTDIYTHQVACVEIWPSKLNQ) the chain is Extracellular. N-linked (GlcNAc...) asparagine glycosylation occurs at N182. A helical transmembrane segment spans residues 207–227 (LLFSTSLFMLQYFVPLGFILI). Topologically, residues 228-263 (CYLKIVLCLRKRTRQVDRRKENKSRLNENKRVNVML) are cytoplasmic. Residues 264-284 (ISIVVTFGACWLPLNIFNVIF) traverse the membrane as a helical segment. At 285–297 (DWYHEMLMSCHHD) the chain is on the extracellular side. The chain crosses the membrane as a helical span at residues 298 to 318 (LVFVVCHLIAMVSTCINPLFY). The Cytoplasmic segment spans residues 319 to 371 (GFLNKNFQKDLMMLIHHCWCGEPQESYENIAMSTMHTDESKGSLKLAHIPTGI). The S-palmitoyl cysteine moiety is linked to residue C336.

This sequence belongs to the G-protein coupled receptor 1 family. As to expression, kidney and discrete regions of the hypothalamus including the suprachiasmatic nucleus, anterior hypothalamus, bed nucleus stria terminalis, and the ventromedial nucleus.

It is found in the cell membrane. Functionally, receptor for neuropeptide Y and peptide YY. The rank order of affinity of this receptor for pancreatic polypeptides is NPY = PYY &gt;= NPY (2-36) = [Leu-31, Pro-34] NPY &gt; NPY (13-36) &gt; PP. The activity of this receptor is mediated by G proteins that inhibits adenylate cyclase activity. The sequence is that of Neuropeptide Y receptor type 6 (Npy6r) from Mus musculus (Mouse).